We begin with the raw amino-acid sequence, 497 residues long: MSEAFLRFDGISVEFPGVKALDEVSFSARAGEVHALMGENGAGKSTLLKVLSGVNRPSSGQLWIDGQAHVFANAREALAHGIAIIYQELTLSPNLSVAENLLLGQLPERRGFIDRRTMKARAREILEELGEGDIDPATKVRELSIGQQQMIEIGRALLRDARIIAFDEPTSSLSVQETRQLKRIVARLRDEGRVVLYVTHRMEEVFEMCDAVTVFRDGRHIRTHETLEGLDHDMLVGEMVGRQIDDVYGFRPRDIGDVLMRIDGLQGRGVNEPVNLEVRRGEVLGLFGLVGAGRSELMRLVCGVEKASRGQVALRGETRVFASPHQAIRAGIAMCPEDRKSQGIFPVASVSDNLNISCRRFFRRWGMFRHAARETDNAKTYIQRLSIKTPSHRTPINTLSGGNQQKVILGRWLAEEIDLFVMDEPTRGIDVGARRDIYALLYDLAEQGKGVIVISSDLAEVSSICDRIGVMRDGVLVDIVPREQATQARLLGLALPA.

ABC transporter domains lie at leucine 6–arginine 242 and phenylalanine 250–alanine 497. An ATP-binding site is contributed by glycine 38–serine 45.

Belongs to the ABC transporter superfamily. Arabinose importer (TC 3.A.1.2.2) family. The complex is composed of two ATP-binding proteins (AraG), two transmembrane proteins (AraH) and a solute-binding protein (AraF).

Its subcellular location is the cell inner membrane. The catalysed reaction is L-arabinose(out) + ATP + H2O = L-arabinose(in) + ADP + phosphate + H(+). Part of the ABC transporter complex AraFGH involved in arabinose import. Responsible for energy coupling to the transport system. The chain is Arabinose import ATP-binding protein AraG from Chromohalobacter salexigens (strain ATCC BAA-138 / DSM 3043 / CIP 106854 / NCIMB 13768 / 1H11).